We begin with the raw amino-acid sequence, 349 residues long: UDP-N-acetylenolpyruvoylglucosamine reductase (349 aa).

Positions 17-187 constitute an FAD-binding PCMH-type domain; it reads VNESADLIIQ…TAITLRLNKQ (171 aa). The active site involves Arg-163. The Proton donor role is filled by Ser-233. Glu-328 is a catalytic residue.

The protein belongs to the MurB family. Requires FAD as cofactor.

The protein localises to the cytoplasm. The catalysed reaction is UDP-N-acetyl-alpha-D-muramate + NADP(+) = UDP-N-acetyl-3-O-(1-carboxyvinyl)-alpha-D-glucosamine + NADPH + H(+). The protein operates within cell wall biogenesis; peptidoglycan biosynthesis. Its function is as follows. Cell wall formation. This is UDP-N-acetylenolpyruvoylglucosamine reductase from Aliivibrio fischeri (strain ATCC 700601 / ES114) (Vibrio fischeri).